The sequence spans 231 residues: 2-C-methyl-D-erythritol 4-phosphate cytidylyltransferase (231 aa).

It belongs to the IspD/TarI cytidylyltransferase family. IspD subfamily. In terms of assembly, homodimer.

The catalysed reaction is 2-C-methyl-D-erythritol 4-phosphate + CTP + H(+) = 4-CDP-2-C-methyl-D-erythritol + diphosphate. Its pathway is isoprenoid biosynthesis; isopentenyl diphosphate biosynthesis via DXP pathway; isopentenyl diphosphate from 1-deoxy-D-xylulose 5-phosphate: step 2/6. In terms of biological role, catalyzes the formation of 4-diphosphocytidyl-2-C-methyl-D-erythritol from CTP and 2-C-methyl-D-erythritol 4-phosphate (MEP). This chain is 2-C-methyl-D-erythritol 4-phosphate cytidylyltransferase, found in Citrobacter koseri (strain ATCC BAA-895 / CDC 4225-83 / SGSC4696).